We begin with the raw amino-acid sequence, 193 residues long: Thymidine kinase (193 aa).

Residues 16–23 (GPMFSGKS) and 89–92 (DEIQ) each bind ATP. The active-site Proton acceptor is Glu-90. 4 residues coordinate Zn(2+): Cys-146, Cys-149, Cys-184, and Cys-187.

This sequence belongs to the thymidine kinase family. In terms of assembly, homotetramer.

The protein localises to the cytoplasm. The enzyme catalyses thymidine + ATP = dTMP + ADP + H(+). This chain is Thymidine kinase, found in Caldanaerobacter subterraneus subsp. tengcongensis (strain DSM 15242 / JCM 11007 / NBRC 100824 / MB4) (Thermoanaerobacter tengcongensis).